Consider the following 63-residue polypeptide: Cecropin (63 aa).

The N-terminal stretch at 1–23 is a signal peptide; it reads MNFYKIFVFIALILALSVSQSEA. Position 62 is an arginine amide (arginine 62).

As to quaternary structure, monomer. As to expression, hemolymph.

Its subcellular location is the secreted. Its function is as follows. Cecropins have lytic and antibacterial activity against several Gram-negative bacteria. In Glossina morsitans morsitans (Savannah tsetse fly), this protein is Cecropin.